The sequence spans 355 residues: MFEVGGKCLAYHGPLLYEAKILRRWNPKLEKVEYSVPLKSGEEDGLPESMNREEFYYYIHYQGWKSSWDEWVSVDRIMELTEANIELKKQLVMEAKKASLAQQQKTKNGGSAKRGGGGAHSESNHGGRRSGSGDRRDSNAEERGIVPSEGPFRTSSVMSYNFSRNKLRIHIPMILESMLVDDWEIVTKEKKISNLPNPFPVETILDRFYKDVATRTTSPVELSLVEEYVYGLKQYFNEAIGNLLLYKLERLQYEQVFYPTPEQQQAMTPVERSLSGRRPGQLYGVLHLLRLISILPEMLSNCVGMDTQAINVILRHTEKLLLWLVDRIEDLLPHKVHKSYYTNTSSQYEGVALGL.

The Tudor-knot domain maps to 3 to 77 (EVGGKCLAYH…WDEWVSVDRI (75 aa)). The interval 98–150 (ASLAQQQKTKNGGSAKRGGGGAHSESNHGGRRSGSGDRRDSNAEERGIVPSEG) is disordered. Residues 131–144 (GSGDRRDSNAEERG) show a composition bias toward basic and acidic residues. The 191-residue stretch at 163 to 353 (SRNKLRIHIP…TSSQYEGVAL (191 aa)) folds into the MRG domain.

It belongs to the MRG family. As to quaternary structure, component of the NuA4 histone acetyltransferase complex.

The protein resides in the nucleus. Functionally, involved in deacetylation of histones, chromatin assembly and chromosome segregation. May act as a transcriptional oscillator, directing histone deacetylases to specific chromosomal domains. Component of the NuA4 histone acetyltransferase complex which is involved in transcriptional activation of selected genes principally by acetylation of nucleosomal histone H4 and H2A. The NuA4 complex is also involved in DNA repair. The protein is Chromatin modification-related protein EAF3 (EAF3) of Candida glabrata (strain ATCC 2001 / BCRC 20586 / JCM 3761 / NBRC 0622 / NRRL Y-65 / CBS 138) (Yeast).